A 362-amino-acid polypeptide reads, in one-letter code: UDP-N-acetylglucosamine--N-acetylmuramyl-(pentapeptide) pyrophosphoryl-undecaprenol N-acetylglucosamine transferase (362 aa).

Residues 15-17 (TGG), N127, R165, S191, I247, 266-271 (ALTVSE), and Q292 each bind UDP-N-acetyl-alpha-D-glucosamine.

This sequence belongs to the glycosyltransferase 28 family. MurG subfamily.

It is found in the cell inner membrane. It carries out the reaction di-trans,octa-cis-undecaprenyl diphospho-N-acetyl-alpha-D-muramoyl-L-alanyl-D-glutamyl-meso-2,6-diaminopimeloyl-D-alanyl-D-alanine + UDP-N-acetyl-alpha-D-glucosamine = di-trans,octa-cis-undecaprenyl diphospho-[N-acetyl-alpha-D-glucosaminyl-(1-&gt;4)]-N-acetyl-alpha-D-muramoyl-L-alanyl-D-glutamyl-meso-2,6-diaminopimeloyl-D-alanyl-D-alanine + UDP + H(+). Its pathway is cell wall biogenesis; peptidoglycan biosynthesis. In terms of biological role, cell wall formation. Catalyzes the transfer of a GlcNAc subunit on undecaprenyl-pyrophosphoryl-MurNAc-pentapeptide (lipid intermediate I) to form undecaprenyl-pyrophosphoryl-MurNAc-(pentapeptide)GlcNAc (lipid intermediate II). This Shewanella baltica (strain OS223) protein is UDP-N-acetylglucosamine--N-acetylmuramyl-(pentapeptide) pyrophosphoryl-undecaprenol N-acetylglucosamine transferase.